Reading from the N-terminus, the 281-residue chain is NH(3)-dependent NAD(+) synthetase (281 aa).

24-31 is an ATP binding site; that stretch reads GVSGGVDS. Asp-30 contacts Mg(2+). Residue Arg-145 participates in deamido-NAD(+) binding. Thr-165 is an ATP binding site. Residue Glu-170 participates in Mg(2+) binding. Positions 178 and 185 each coordinate deamido-NAD(+). The ATP site is built by Lys-194 and Ser-216.

The protein belongs to the NAD synthetase family. Homodimer.

The enzyme catalyses deamido-NAD(+) + NH4(+) + ATP = AMP + diphosphate + NAD(+) + H(+). It functions in the pathway cofactor biosynthesis; NAD(+) biosynthesis; NAD(+) from deamido-NAD(+) (ammonia route): step 1/1. Its function is as follows. Catalyzes the ATP-dependent amidation of deamido-NAD to form NAD. Uses ammonia as a nitrogen source. The polypeptide is NH(3)-dependent NAD(+) synthetase (nadE1) (Thermotoga maritima (strain ATCC 43589 / DSM 3109 / JCM 10099 / NBRC 100826 / MSB8)).